Here is a 657-residue protein sequence, read N- to C-terminus: Glycogen debranching enzyme (657 aa).

D336 serves as the catalytic Nucleophile. E371 serves as the catalytic Proton donor. Positions 458-467 are enriched in basic and acidic residues; it reads NEANGEENRD. The disordered stretch occupies residues 458–479; that stretch reads NEANGEENRDGTNNNYSNNHGK.

It belongs to the glycosyl hydrolase 13 family.

The catalysed reaction is Hydrolysis of (1-&gt;6)-alpha-D-glucosidic linkages to branches with degrees of polymerization of three or four glucose residues in limit dextrin.. It participates in glycan degradation; glycogen degradation. Its function is as follows. Removes maltotriose and maltotetraose chains that are attached by 1,6-alpha-linkage to the limit dextrin main chain, generating a debranched limit dextrin. This chain is Glycogen debranching enzyme, found in Escherichia coli O139:H28 (strain E24377A / ETEC).